A 310-amino-acid chain; its full sequence is Leucine carboxyl methyltransferase 1 (310 aa).

S-adenosyl-L-methionine is bound by residues Arg50, Gly75, Asp100, 145-146, and Glu169; that span reads DI.

This sequence belongs to the methyltransferase superfamily. LCMT family.

It carries out the reaction [phosphatase 2A protein]-C-terminal L-leucine + S-adenosyl-L-methionine = [phosphatase 2A protein]-C-terminal L-leucine methyl ester + S-adenosyl-L-homocysteine. Methylates the carboxyl group of the C-terminal leucine residue of protein phosphatase 2A catalytic subunits to form alpha-leucine ester residues. The polypeptide is Leucine carboxyl methyltransferase 1 (ppm1) (Schizosaccharomyces pombe (strain 972 / ATCC 24843) (Fission yeast)).